A 430-amino-acid polypeptide reads, in one-letter code: MRITTPVNPDGVQFPVWDRPDRFFFAPERHERHDLSRPGFFIRAEGIMTDIGRMAHVVPARTQLPVSAYFDEARFAREQELIFKQSSLYVGHQKLVPELGDWRTLVQEDGGRALVRNQRGVELVSNVCRHRQALMLGGEAGNVSGNANTRGSLKDTGGNIVCPLHRWTYNDRGELLGAPQFDATPCMNLQRFRLRDCHGLLFEGPRDPAADMAPLFARPEFDFGDYVLDHVEVHQCNYNWKTFIEVYLEDYHVGPFHPGLGRFVTCDDLAWEFNDWYSLQRVGVHQALAQPGSAVYKQWHDRLLDFRAGQAPDFGAMWVTYFPTHMIELYPHVLVLSTLYPKSPQETLNVVEFYYPEEIVAFEREFVEAQRAAYMETAIEDDEIAERMDAGRKALMLRGANETGPYQSPMEDGMQHFHEWYRRVMGETED.

The 116-residue stretch at 88–203 (LYVGHQKLVP…LRDCHGLLFE (116 aa)) folds into the Rieske domain. Cys128, His130, Cys162, and His165 together coordinate [2Fe-2S] cluster.

The protein belongs to the bacterial ring-hydroxylating dioxygenase alpha subunit family. Requires [2Fe-2S] cluster as cofactor.

Functionally, rieske-type iron sulfur protein that can catalyze in vitro the 2-hydroxylation of putrescine, forming 2-hydroxyputrescine. May be involved in the biosynthesis of the cyclic hydroxamate siderophore alcaligin. The polypeptide is Putrescine 2-hydroxylase (Bordetella bronchiseptica (strain ATCC BAA-588 / NCTC 13252 / RB50) (Alcaligenes bronchisepticus)).